Here is a 783-residue protein sequence, read N- to C-terminus: BMP/retinoic acid-inducible neural-specific protein 2 (783 aa).

An N-terminal signal peptide occupies residues 1 to 33 (MRWQCGTRFRGLRPVVAPWTALLALGLPGWVLA). The 197-residue stretch at 85–281 (RYRIYREFAR…FVAAALSYIT (197 aa)) folds into the MACPF domain. Residues asparagine 185, asparagine 354, asparagine 473, asparagine 579, asparagine 626, and asparagine 658 are each glycosylated (N-linked (GlcNAc...) asparagine).

This sequence belongs to the BRINP family.

It is found in the secreted. Inhibits neuronal cell proliferation by negative regulation of the cell cycle transition. This Pongo abelii (Sumatran orangutan) protein is BMP/retinoic acid-inducible neural-specific protein 2 (BRINP2).